We begin with the raw amino-acid sequence, 202 residues long: Small ribosomal subunit protein uS4c (202 aa).

An S4 RNA-binding domain is found at 90 to 158 (MRLDNIIFRL…MKRSRDSYEK (69 aa)).

Belongs to the universal ribosomal protein uS4 family. As to quaternary structure, part of the 30S ribosomal subunit. Contacts protein S5. The interaction surface between S4 and S5 is involved in control of translational fidelity.

The protein localises to the plastid. It localises to the chloroplast. In terms of biological role, one of the primary rRNA binding proteins, it binds directly to 16S rRNA where it nucleates assembly of the body of the 30S subunit. Functionally, with S5 and S12 plays an important role in translational accuracy. The protein is Small ribosomal subunit protein uS4c (rps4) of Anthoceros angustus (Hornwort).